A 162-amino-acid chain; its full sequence is Phosphopantetheine adenylyltransferase (162 aa).

Substrate is bound at residue T10. ATP is bound by residues T10–F11 and H18. Substrate is bound by residues K42, L74, and R88. ATP-binding positions include G89–R91, E99, and N124–T130.

This sequence belongs to the bacterial CoaD family. Homohexamer. The cofactor is Mg(2+).

The protein localises to the cytoplasm. The catalysed reaction is (R)-4'-phosphopantetheine + ATP + H(+) = 3'-dephospho-CoA + diphosphate. The protein operates within cofactor biosynthesis; coenzyme A biosynthesis; CoA from (R)-pantothenate: step 4/5. Functionally, reversibly transfers an adenylyl group from ATP to 4'-phosphopantetheine, yielding dephospho-CoA (dPCoA) and pyrophosphate. This is Phosphopantetheine adenylyltransferase from Alteromonas mediterranea (strain DSM 17117 / CIP 110805 / LMG 28347 / Deep ecotype).